The following is a 73-amino-acid chain: Toxin Td9 (73 aa).

The first 7 residues, 1–7 (IGMVAEC), serve as a signal peptide directing secretion. Residues 8 to 70 (KDGYLVGDDG…IWNSATNSCG (63 aa)) enclose the LCN-type CS-alpha/beta domain. Cystine bridges form between cysteine 18–cysteine 69, cysteine 22–cysteine 44, cysteine 30–cysteine 50, and cysteine 34–cysteine 52. Lysine 71 is modified (lysine amide).

This sequence belongs to the long (4 C-C) scorpion toxin superfamily. Sodium channel inhibitor family. Beta subfamily. As to expression, expressed by the venom gland.

The protein resides in the secreted. Functionally, beta toxins bind voltage-independently at site-4 of sodium channels (Nav) and shift the voltage of activation toward more negative potentials thereby affecting sodium channel activation and promoting spontaneous and repetitive firing. This is Toxin Td9 from Tityus discrepans (Venezuelan scorpion).